Here is a 314-residue protein sequence, read N- to C-terminus: Malate dehydrogenase (314 aa).

Residues 7–13 and D34 contribute to the NAD(+) site; that span reads GAAGGIG. R81 and R87 together coordinate substrate. NAD(+) contacts are provided by residues N94 and 117–119; that span reads ITN. 2 residues coordinate substrate: N119 and R153. H177 acts as the Proton acceptor in catalysis. M230 lines the NAD(+) pocket.

This sequence belongs to the LDH/MDH superfamily. MDH type 1 family. As to quaternary structure, homodimer.

It catalyses the reaction (S)-malate + NAD(+) = oxaloacetate + NADH + H(+). Catalyzes the reversible oxidation of malate to oxaloacetate. This chain is Malate dehydrogenase, found in Glaesserella parasuis serovar 5 (strain SH0165) (Haemophilus parasuis).